Here is a 145-residue protein sequence, read N- to C-terminus: D-aminoacyl-tRNA deacylase (145 aa).

Residues 137 to 138 (GP) carry the Gly-cisPro motif, important for rejection of L-amino acids motif.

The protein belongs to the DTD family. Homodimer.

It is found in the cytoplasm. The catalysed reaction is glycyl-tRNA(Ala) + H2O = tRNA(Ala) + glycine + H(+). It catalyses the reaction a D-aminoacyl-tRNA + H2O = a tRNA + a D-alpha-amino acid + H(+). Its function is as follows. An aminoacyl-tRNA editing enzyme that deacylates mischarged D-aminoacyl-tRNAs. Also deacylates mischarged glycyl-tRNA(Ala), protecting cells against glycine mischarging by AlaRS. Acts via tRNA-based rather than protein-based catalysis; rejects L-amino acids rather than detecting D-amino acids in the active site. By recycling D-aminoacyl-tRNA to D-amino acids and free tRNA molecules, this enzyme counteracts the toxicity associated with the formation of D-aminoacyl-tRNA entities in vivo and helps enforce protein L-homochirality. This chain is D-aminoacyl-tRNA deacylase, found in Salmonella paratyphi A (strain AKU_12601).